Reading from the N-terminus, the 447-residue chain is Tubulin beta-4 chain (447 aa).

Residues Gln11, Glu69, Ser138, Gly142, Thr143, Gly144, Asn204, and Asn226 each contribute to the GTP site. Glu69 lines the Mg(2+) pocket. Positions 423–447 (QQYQDATADEEGEYEDEEQQEADDM) are disordered. Positions 429–447 (TADEEGEYEDEEQQEADDM) are enriched in acidic residues.

It belongs to the tubulin family. As to quaternary structure, dimer of alpha and beta chains. A typical microtubule is a hollow water-filled tube with an outer diameter of 25 nm and an inner diameter of 15 nM. Alpha-beta heterodimers associate head-to-tail to form protofilaments running lengthwise along the microtubule wall with the beta-tubulin subunit facing the microtubule plus end conferring a structural polarity. Microtubules usually have 13 protofilaments but different protofilament numbers can be found in some organisms and specialized cells. The cofactor is Mg(2+). As to expression, expressed in roots and leaf sheaths.

The protein resides in the cytoplasm. It is found in the cytoskeleton. Its function is as follows. Tubulin is the major constituent of microtubules, a cylinder consisting of laterally associated linear protofilaments composed of alpha- and beta-tubulin heterodimers. Microtubules grow by the addition of GTP-tubulin dimers to the microtubule end, where a stabilizing cap forms. Below the cap, tubulin dimers are in GDP-bound state, owing to GTPase activity of alpha-tubulin. The protein is Tubulin beta-4 chain (TUBB4) of Oryza sativa subsp. japonica (Rice).